The sequence spans 144 residues: Large ribosomal subunit protein uL15 (144 aa).

Residues 1–52 are disordered; sequence MRLNSLSPAEGAKHSAKRLGRGIGSGLGKTGGRGHKGQKSRTGGGVRRGFEG. Gly residues predominate over residues 21-31; the sequence is RGIGSGLGKTG.

The protein belongs to the universal ribosomal protein uL15 family. As to quaternary structure, part of the 50S ribosomal subunit.

Its function is as follows. Binds to the 23S rRNA. This is Large ribosomal subunit protein uL15 from Actinobacillus pleuropneumoniae serotype 5b (strain L20).